The following is a 378-amino-acid chain: UPF0754 membrane protein BT9727_0767 (378 aa).

The next 2 helical transmembrane spans lie at 1-21 (MNIWLSMLTTTGLGAIIGGFT) and 357-377 (YLGALLGGMIGIVQGLLLLFL).

The protein belongs to the UPF0754 family.

It is found in the cell membrane. The polypeptide is UPF0754 membrane protein BT9727_0767 (Bacillus thuringiensis subsp. konkukian (strain 97-27)).